Consider the following 259-residue polypeptide: ATP synthase subunit a (259 aa).

Helical transmembrane passes span 37–57, 101–121, 131–151, 157–177, 203–223, and 232–252; these read LSIT…FLFM, YFPA…LGLI, LVVT…LAIV, FIGF…MVPI, VLAI…LMPA, and FELF…CVYI.

Belongs to the ATPase A chain family. In terms of assembly, F-type ATPases have 2 components, CF(1) - the catalytic core - and CF(0) - the membrane proton channel. CF(1) has five subunits: alpha(3), beta(3), gamma(1), delta(1), epsilon(1). CF(0) has three main subunits: a(1), b(2) and c(9-12). The alpha and beta chains form an alternating ring which encloses part of the gamma chain. CF(1) is attached to CF(0) by a central stalk formed by the gamma and epsilon chains, while a peripheral stalk is formed by the delta and b chains.

The protein localises to the cell inner membrane. Key component of the proton channel; it plays a direct role in the translocation of protons across the membrane. This chain is ATP synthase subunit a, found in Magnetococcus marinus (strain ATCC BAA-1437 / JCM 17883 / MC-1).